The primary structure comprises 137 residues: Probable disulfide formation protein C (137 aa).

Residues 6-25 (ENLMLGSWLTALTAMLGSLY) form a helical membrane-spanning segment. A disulfide bridge connects residues Cys-35 and Cys-38. 2 helical membrane passes run 40-59 (YQRI…YLKR) and 66-83 (YSLW…YHYS). Cys-97 and Cys-102 are oxidised to a cystine. The chain crosses the membrane as a helical span at residues 111 to 133 (GFVTIPFLAFTAFVIIFICSLLI).

The protein belongs to the DsbB family. BdbC subfamily.

The protein localises to the cell membrane. In terms of biological role, required for disulfide bond formation in some proteins. The polypeptide is Probable disulfide formation protein C (Halalkalibacterium halodurans (strain ATCC BAA-125 / DSM 18197 / FERM 7344 / JCM 9153 / C-125) (Bacillus halodurans)).